The chain runs to 427 residues: Glutamate-1-semialdehyde 2,1-aminomutase (427 aa).

Position 268 is an N6-(pyridoxal phosphate)lysine (lysine 268).

It belongs to the class-III pyridoxal-phosphate-dependent aminotransferase family. HemL subfamily. It depends on pyridoxal 5'-phosphate as a cofactor.

The protein resides in the cytoplasm. The enzyme catalyses (S)-4-amino-5-oxopentanoate = 5-aminolevulinate. Its pathway is porphyrin-containing compound metabolism; protoporphyrin-IX biosynthesis; 5-aminolevulinate from L-glutamyl-tRNA(Glu): step 2/2. This chain is Glutamate-1-semialdehyde 2,1-aminomutase, found in Methanococcus maripaludis (strain C5 / ATCC BAA-1333).